The sequence spans 417 residues: C4-dicarboxylate transport protein (417 aa).

Transmembrane regions (helical) follow at residues 4–26 (IYVQVLIAIVLGVLVGAIWPQIG), 41–60 (KLVIAPVIFCTVAGGIARMG), 72–94 (ALIYFEVVSTLALVIGLVVGRLI), 137–159 (FIGAFADGNLLQVLVIAILTGFA), 180–202 (LFFGIIHIVVRLAPIGAFGAMGF), 217–239 (ALVATFYVTSLLFVLVVLGGIAW), 285–307 (VVGLVIPTGYSFNLDGTNIYMTL), and 347–369 (FITLAATLAVVPDIPIAALAILV).

Belongs to the dicarboxylate/amino acid:cation symporter (DAACS) (TC 2.A.23) family.

It localises to the cell inner membrane. Functionally, responsible for the transport of dicarboxylates such as succinate, fumarate, and malate from the periplasm across the membrane. The sequence is that of C4-dicarboxylate transport protein from Caulobacter vibrioides (strain ATCC 19089 / CIP 103742 / CB 15) (Caulobacter crescentus).